A 521-amino-acid polypeptide reads, in one-letter code: Bifunctional purine biosynthesis protein PurH (521 aa).

An MGS-like domain is found at 1–145; that stretch reads MIKQALISVS…KNHKDVIVIC (145 aa).

The protein belongs to the PurH family.

The enzyme catalyses (6R)-10-formyltetrahydrofolate + 5-amino-1-(5-phospho-beta-D-ribosyl)imidazole-4-carboxamide = 5-formamido-1-(5-phospho-D-ribosyl)imidazole-4-carboxamide + (6S)-5,6,7,8-tetrahydrofolate. It catalyses the reaction IMP + H2O = 5-formamido-1-(5-phospho-D-ribosyl)imidazole-4-carboxamide. Its pathway is purine metabolism; IMP biosynthesis via de novo pathway; 5-formamido-1-(5-phospho-D-ribosyl)imidazole-4-carboxamide from 5-amino-1-(5-phospho-D-ribosyl)imidazole-4-carboxamide (10-formyl THF route): step 1/1. The protein operates within purine metabolism; IMP biosynthesis via de novo pathway; IMP from 5-formamido-1-(5-phospho-D-ribosyl)imidazole-4-carboxamide: step 1/1. The polypeptide is Bifunctional purine biosynthesis protein PurH (Herminiimonas arsenicoxydans).